A 393-amino-acid polypeptide reads, in one-letter code: NAD(P)H-quinone oxidoreductase subunit H, chloroplastic (393 aa).

It belongs to the complex I 49 kDa subunit family. NDH is composed of at least 16 different subunits, 5 of which are encoded in the nucleus.

The protein localises to the plastid. Its subcellular location is the chloroplast thylakoid membrane. It carries out the reaction a plastoquinone + NADH + (n+1) H(+)(in) = a plastoquinol + NAD(+) + n H(+)(out). It catalyses the reaction a plastoquinone + NADPH + (n+1) H(+)(in) = a plastoquinol + NADP(+) + n H(+)(out). In terms of biological role, NDH shuttles electrons from NAD(P)H:plastoquinone, via FMN and iron-sulfur (Fe-S) centers, to quinones in the photosynthetic chain and possibly in a chloroplast respiratory chain. The immediate electron acceptor for the enzyme in this species is believed to be plastoquinone. Couples the redox reaction to proton translocation, and thus conserves the redox energy in a proton gradient. In Nicotiana sylvestris (Wood tobacco), this protein is NAD(P)H-quinone oxidoreductase subunit H, chloroplastic.